The sequence spans 252 residues: 3-dehydroquinate dehydratase (252 aa).

Residues S21, 46–48 (EWR), and R82 contribute to the 3-dehydroquinate site. The active-site Proton donor/acceptor is H143. Catalysis depends on K170, which acts as the Schiff-base intermediate with substrate. The 3-dehydroquinate site is built by R213, S232, and Q236.

This sequence belongs to the type-I 3-dehydroquinase family. Homodimer.

The enzyme catalyses 3-dehydroquinate = 3-dehydroshikimate + H2O. It functions in the pathway metabolic intermediate biosynthesis; chorismate biosynthesis; chorismate from D-erythrose 4-phosphate and phosphoenolpyruvate: step 3/7. Involved in the third step of the chorismate pathway, which leads to the biosynthesis of aromatic amino acids. Catalyzes the cis-dehydration of 3-dehydroquinate (DHQ) and introduces the first double bond of the aromatic ring to yield 3-dehydroshikimate. This Shigella flexneri serotype 5b (strain 8401) protein is 3-dehydroquinate dehydratase.